We begin with the raw amino-acid sequence, 355 residues long: UDP-N-acetylglucosamine--N-acetylmuramyl-(pentapeptide) pyrophosphoryl-undecaprenol N-acetylglucosamine transferase (355 aa).

Residues 13–15 (TGG), Asn125, Arg162, Ser190, Ile244, and Gln289 each bind UDP-N-acetyl-alpha-D-glucosamine.

Belongs to the glycosyltransferase 28 family. MurG subfamily.

The protein localises to the cell inner membrane. It catalyses the reaction di-trans,octa-cis-undecaprenyl diphospho-N-acetyl-alpha-D-muramoyl-L-alanyl-D-glutamyl-meso-2,6-diaminopimeloyl-D-alanyl-D-alanine + UDP-N-acetyl-alpha-D-glucosamine = di-trans,octa-cis-undecaprenyl diphospho-[N-acetyl-alpha-D-glucosaminyl-(1-&gt;4)]-N-acetyl-alpha-D-muramoyl-L-alanyl-D-glutamyl-meso-2,6-diaminopimeloyl-D-alanyl-D-alanine + UDP + H(+). It functions in the pathway cell wall biogenesis; peptidoglycan biosynthesis. Its function is as follows. Cell wall formation. Catalyzes the transfer of a GlcNAc subunit on undecaprenyl-pyrophosphoryl-MurNAc-pentapeptide (lipid intermediate I) to form undecaprenyl-pyrophosphoryl-MurNAc-(pentapeptide)GlcNAc (lipid intermediate II). In Neisseria meningitidis serogroup C / serotype 2a (strain ATCC 700532 / DSM 15464 / FAM18), this protein is UDP-N-acetylglucosamine--N-acetylmuramyl-(pentapeptide) pyrophosphoryl-undecaprenol N-acetylglucosamine transferase.